A 488-amino-acid polypeptide reads, in one-letter code: UDP-glycosyltransferase 92A1 (488 aa).

Residues Ser-292, 358–360, 375–383, and 397–400 each bind UDP-alpha-D-glucose; these read APQ, HCGWNSILE, and AAEQ.

The protein belongs to the UDP-glycosyltransferase family.

The polypeptide is UDP-glycosyltransferase 92A1 (UGT92A1) (Arabidopsis thaliana (Mouse-ear cress)).